A 293-amino-acid chain; its full sequence is ATP phosphoribosyltransferase (293 aa).

The protein belongs to the ATP phosphoribosyltransferase family. Long subfamily. Mg(2+) is required as a cofactor.

It is found in the cytoplasm. It catalyses the reaction 1-(5-phospho-beta-D-ribosyl)-ATP + diphosphate = 5-phospho-alpha-D-ribose 1-diphosphate + ATP. It participates in amino-acid biosynthesis; L-histidine biosynthesis; L-histidine from 5-phospho-alpha-D-ribose 1-diphosphate: step 1/9. Feedback inhibited by histidine. In terms of biological role, catalyzes the condensation of ATP and 5-phosphoribose 1-diphosphate to form N'-(5'-phosphoribosyl)-ATP (PR-ATP). Has a crucial role in the pathway because the rate of histidine biosynthesis seems to be controlled primarily by regulation of HisG enzymatic activity. The polypeptide is ATP phosphoribosyltransferase (Nitratidesulfovibrio vulgaris (strain ATCC 29579 / DSM 644 / CCUG 34227 / NCIMB 8303 / VKM B-1760 / Hildenborough) (Desulfovibrio vulgaris)).